The following is a 591-amino-acid chain: L-fucose isomerase (591 aa).

Catalysis depends on proton acceptor residues glutamate 337 and aspartate 361. The Mn(2+) site is built by glutamate 337, aspartate 361, and histidine 528.

This sequence belongs to the L-fucose isomerase family. Homohexamer. Mn(2+) serves as cofactor.

The protein localises to the cytoplasm. It carries out the reaction L-fucose = L-fuculose. It participates in carbohydrate degradation; L-fucose degradation; L-lactaldehyde and glycerone phosphate from L-fucose: step 1/3. Its function is as follows. Converts the aldose L-fucose into the corresponding ketose L-fuculose. The protein is L-fucose isomerase of Shigella dysenteriae serotype 1 (strain Sd197).